The chain runs to 185 residues: Ribosome-recycling factor (185 aa).

Belongs to the RRF family.

It localises to the cytoplasm. Its function is as follows. Responsible for the release of ribosomes from messenger RNA at the termination of protein biosynthesis. May increase the efficiency of translation by recycling ribosomes from one round of translation to another. This Campylobacter concisus (strain 13826) protein is Ribosome-recycling factor.